The chain runs to 216 residues: 3,4-dihydroxy-2-butanone 4-phosphate synthase (216 aa).

D-ribulose 5-phosphate-binding positions include 33–34 (RE), Asp38, 146–150 (RRGHT), and Glu170. Glu34 is a Mg(2+) binding site. His149 is a binding site for Mg(2+).

This sequence belongs to the DHBP synthase family. Homodimer. Mg(2+) is required as a cofactor. It depends on Mn(2+) as a cofactor.

The enzyme catalyses D-ribulose 5-phosphate = (2S)-2-hydroxy-3-oxobutyl phosphate + formate + H(+). It functions in the pathway cofactor biosynthesis; riboflavin biosynthesis; 2-hydroxy-3-oxobutyl phosphate from D-ribulose 5-phosphate: step 1/1. Catalyzes the conversion of D-ribulose 5-phosphate to formate and 3,4-dihydroxy-2-butanone 4-phosphate. The chain is 3,4-dihydroxy-2-butanone 4-phosphate synthase from Pseudomonas putida (strain ATCC 47054 / DSM 6125 / CFBP 8728 / NCIMB 11950 / KT2440).